A 490-amino-acid polypeptide reads, in one-letter code: Limb region 1 protein homolog (490 aa).

At 1–19 the chain is on the extracellular side; sequence MEGQDEVSAREQHFHSQVR. The helical transmembrane segment at 20–40 threads the bilayer; sequence ESTICFLLFAILYVVSYFIIT. Topologically, residues 41–62 are cytoplasmic; the sequence is RYKRKSDEQEDEDAIVNRISLF. The chain crosses the membrane as a helical span at residues 63–83; the sequence is LSTFTLAVSAGAVLLLPFSII. The Extracellular portion of the chain corresponds to 84-110; sequence SNEILLSFPQNYYIQWLNGSLIHGLWN. A helical membrane pass occupies residues 111–131; it reads LASLFSNLCLFVLMPFAFFFL. The Cytoplasmic segment spans residues 132 to 151; the sequence is ESEGFAGLKKGIRARILETL. Residues 152-172 form a helical membrane-spanning segment; the sequence is VMLLLLALLILGIVWVASALI. The Extracellular segment spans residues 173-187; it reads DNDAASMESLYDLWE. Residues 188–208 form a helical membrane-spanning segment; that stretch reads FYLPYLYSCISLMGCLLLLLC. At 209–291 the chain is on the cytoplasmic side; sequence TPVGLSRMFT…RKKASAWERN (83 aa). A coiled-coil region spans residues 250–287; sequence RLNGLSSSVEYNIMELEQELENVKTLKTKLERRKKASA. The helical transmembrane segment at 292 to 312 threads the bilayer; it reads LVYPAVMVLLLIETSISVLLV. Residues 313–339 lie on the Extracellular side of the membrane; sequence ACNILCLLVDETAMPKGTRGPGIGNAS. The helical transmembrane segment at 340-360 threads the bilayer; that stretch reads LSTFGFVGAALEIILIFYLMV. The Cytoplasmic portion of the chain corresponds to 361 to 383; sequence SSVVGFYSLRFFGNFTPKKDDTT. A helical transmembrane segment spans residues 384–404; that stretch reads MTKIIGNCVSILVLSSALPVM. The Extracellular segment spans residues 405 to 426; sequence SRTLGITRFDLLGDFGRFNWLG. The chain crosses the membrane as a helical span at residues 427 to 447; sequence NFYIVLSYNLLFAIVTTLCLV. Topologically, residues 448 to 490 are cytoplasmic; it reads RKFTSAVREELFKALGLHKLHLPNTSRDSETAKPSVNGHQKAL.

This sequence belongs to the LIMR family. As to expression, widely expressed with strongest expression in heart and pancreas.

Its subcellular location is the membrane. Functionally, putative membrane receptor. The polypeptide is Limb region 1 protein homolog (LMBR1) (Homo sapiens (Human)).